The primary structure comprises 1096 residues: Serine/threonine-protein kinase mig-15 (1096 aa).

The region spanning phenylalanine 21–isoleucine 288 is the Protein kinase domain. ATP-binding positions include valine 27–valine 35 and lysine 50. Residue aspartate 151 is the Proton acceptor of the active site. Positions histidine 293 to aspartate 315 are enriched in basic and acidic residues. 4 disordered regions span residues histidine 293–methionine 351, leucine 380–arginine 492, lysine 517–isoleucine 545, and asparagine 574–proline 664. Residues alanine 316–proline 328 are compositionally biased toward acidic residues. Residues leucine 380–glutamine 393 show a composition bias toward low complexity. 2 stretches are compositionally biased toward basic and acidic residues: residues valine 397–leucine 408 and asparagine 453–alanine 472. Pro residues predominate over residues serine 532–arginine 541. Residues leucine 629–asparagine 642 are compositionally biased toward acidic residues. A CNH domain is found at serine 778–valine 1070.

It belongs to the protein kinase superfamily. STE Ser/Thr protein kinase family. STE20 subfamily.

It catalyses the reaction L-seryl-[protein] + ATP = O-phospho-L-seryl-[protein] + ADP + H(+). The catalysed reaction is L-threonyl-[protein] + ATP = O-phospho-L-threonyl-[protein] + ADP + H(+). In terms of biological role, involved in cell migration and signal transduction. Important in several developmental processes including epidermal development, Q neuroblast migrations and muscle arm targeting. Required with ina-1/pat-3 to stabilize the commissural axons growth cone along a precise direction and are required for the cell to respond appropriately when signaling in the growth cone must change. During gonad morphogenesis, involved in distal tip cell (DTC) migration from the dorsal side of the hermaphrodite body to the midbody to allow for formation of gonad arms. This chain is Serine/threonine-protein kinase mig-15 (mig-15), found in Caenorhabditis elegans.